The primary structure comprises 275 residues: Large ribosomal subunit protein uL2 (275 aa).

The disordered stretch occupies residues 223 to 275; the sequence is VAMNPIDHPHGGGEGRTGEAREPVSPWGTPSKGYKTRRNKRTNNMIVQRRKRK. A compositionally biased stretch (basic and acidic residues) spans 229–244; the sequence is DHPHGGGEGRTGEARE.

It belongs to the universal ribosomal protein uL2 family. As to quaternary structure, part of the 50S ribosomal subunit. Forms a bridge to the 30S subunit in the 70S ribosome.

Its function is as follows. One of the primary rRNA binding proteins. Required for association of the 30S and 50S subunits to form the 70S ribosome, for tRNA binding and peptide bond formation. It has been suggested to have peptidyltransferase activity; this is somewhat controversial. Makes several contacts with the 16S rRNA in the 70S ribosome. The chain is Large ribosomal subunit protein uL2 from Bordetella avium (strain 197N).